We begin with the raw amino-acid sequence, 148 residues long: D-aminoacyl-tRNA deacylase (148 aa).

The Gly-cisPro motif, important for rejection of L-amino acids signature appears at 136 to 137; it reads GP.

Belongs to the DTD family. As to quaternary structure, homodimer.

The protein resides in the cytoplasm. The enzyme catalyses glycyl-tRNA(Ala) + H2O = tRNA(Ala) + glycine + H(+). It carries out the reaction a D-aminoacyl-tRNA + H2O = a tRNA + a D-alpha-amino acid + H(+). In terms of biological role, an aminoacyl-tRNA editing enzyme that deacylates mischarged D-aminoacyl-tRNAs. Also deacylates mischarged glycyl-tRNA(Ala), protecting cells against glycine mischarging by AlaRS. Acts via tRNA-based rather than protein-based catalysis; rejects L-amino acids rather than detecting D-amino acids in the active site. By recycling D-aminoacyl-tRNA to D-amino acids and free tRNA molecules, this enzyme counteracts the toxicity associated with the formation of D-aminoacyl-tRNA entities in vivo and helps enforce protein L-homochirality. In Streptococcus mutans serotype c (strain ATCC 700610 / UA159), this protein is D-aminoacyl-tRNA deacylase.